Reading from the N-terminus, the 457-residue chain is tRNA modification GTPase MnmE (457 aa).

Residues Arg25, Glu87, and Arg126 each contribute to the (6S)-5-formyl-5,6,7,8-tetrahydrofolate site. The TrmE-type G domain maps to 223–377; it reads GISTAIIGRP…IEERINQLFF (155 aa). Residue Asn233 participates in K(+) binding. GTP-binding positions include 233–238, 252–258, and 277–280; these read NVGKSS, TDIAGTT, and DTAG. Ser237 provides a ligand contact to Mg(2+). Thr252, Ile254, and Thr257 together coordinate K(+). Residue Thr258 coordinates Mg(2+). Residue Lys457 participates in (6S)-5-formyl-5,6,7,8-tetrahydrofolate binding.

This sequence belongs to the TRAFAC class TrmE-Era-EngA-EngB-Septin-like GTPase superfamily. TrmE GTPase family. As to quaternary structure, homodimer. Heterotetramer of two MnmE and two MnmG subunits. K(+) serves as cofactor.

It localises to the cytoplasm. Its function is as follows. Exhibits a very high intrinsic GTPase hydrolysis rate. Involved in the addition of a carboxymethylaminomethyl (cmnm) group at the wobble position (U34) of certain tRNAs, forming tRNA-cmnm(5)s(2)U34. The protein is tRNA modification GTPase MnmE of Streptococcus gordonii (strain Challis / ATCC 35105 / BCRC 15272 / CH1 / DL1 / V288).